A 340-amino-acid polypeptide reads, in one-letter code: Phosphoribosylformylglycinamidine cyclo-ligase (340 aa).

It belongs to the AIR synthase family.

It localises to the cytoplasm. The enzyme catalyses 2-formamido-N(1)-(5-O-phospho-beta-D-ribosyl)acetamidine + ATP = 5-amino-1-(5-phospho-beta-D-ribosyl)imidazole + ADP + phosphate + H(+). The protein operates within purine metabolism; IMP biosynthesis via de novo pathway; 5-amino-1-(5-phospho-D-ribosyl)imidazole from N(2)-formyl-N(1)-(5-phospho-D-ribosyl)glycinamide: step 2/2. This is Phosphoribosylformylglycinamidine cyclo-ligase from Streptococcus mutans serotype c (strain ATCC 700610 / UA159).